Consider the following 86-residue polypeptide: Defensin-like protein a (86 aa).

Positions 1–23 (MRCSVLFVVSYVIMSLLISHVQG) are cleaved as a signal peptide. 4 cysteine pairs are disulfide-bonded: Cys-33/Cys-81, Cys-43/Cys-67, Cys-51/Cys-76, and Cys-65/Cys-78.

The protein belongs to the DEFL family. In terms of tissue distribution, expressed specifically in anthers.

It is found in the secreted. Involved in self-incompatibility. The chain is Defensin-like protein a (SCRa) from Arabidopsis lyrata (Lyre-leaved rock-cress).